Consider the following 284-residue polypeptide: Putative transcription factor kapC (284 aa).

Over residues 1 to 10 (MQPTLAPAPH) the composition is skewed to pro residues. Residues 1-121 (MQPTLAPAPH…NRAAQRAFRQ (121 aa)) are disordered. Low complexity predominate over residues 26 to 40 (HDQLLAAHQHLSHPQ). A compositionally biased stretch (pro residues) spans 41-54 (QPRPQPPAAQPPHM). The segment covering 57 to 67 (NTTSPRDQNNI) has biased composition (polar residues). The bZIP domain occupies 102 to 165 (PLSTSKRAAQ…EYIINLQSRL (64 aa)). Residues 103-126 (LSTSKRAAQNRAAQRAFRQRKESY) are basic motif. The span at 108–118 (RAAQNRAAQRA) shows a compositional bias: low complexity. The tract at residues 130–161 (LEEQVKEFDTMSEAFKALQAENYQLREYIINL) is leucine-zipper. The tract at residues 174 to 284 (ELPGNIDLSQ…QAPHGLPMVS (111 aa)) is disordered. Residues 193–222 (PGAGPATTSSSAPAPPSGAQQAQPPQGAAS) are compositionally biased toward low complexity.

The protein belongs to the bZIP family.

It is found in the nucleus. Putative transcription factor. The polypeptide is Putative transcription factor kapC (kapC) (Aspergillus oryzae (strain ATCC 42149 / RIB 40) (Yellow koji mold)).